Reading from the N-terminus, the 286-residue chain is 3-hydroxyanthranilate 3,4-dioxygenase (286 aa).

The segment at Met1 to Asn160 is domain A (catalytic). Arg43 contributes to the O2 binding site. Residues His47, Glu53, and His91 each contribute to the Fe cation site. Glu53 provides a ligand contact to substrate. Substrate contacts are provided by Arg95 and Glu105. The linker stretch occupies residues Pro161–Val177. Positions Met178–Gly286 are domain B.

This sequence belongs to the 3-HAO family. Monomer. Fe(2+) is required as a cofactor.

The protein localises to the cytoplasm. Its subcellular location is the cytosol. The catalysed reaction is 3-hydroxyanthranilate + O2 = (2Z,4Z)-2-amino-3-carboxymuconate 6-semialdehyde. It functions in the pathway cofactor biosynthesis; NAD(+) biosynthesis; quinolinate from L-kynurenine: step 3/3. Its function is as follows. Catalyzes the oxidative ring opening of 3-hydroxyanthranilate to 2-amino-3-carboxymuconate semialdehyde, which spontaneously cyclizes to quinolinate. The sequence is that of 3-hydroxyanthranilate 3,4-dioxygenase (Haao) from Rattus norvegicus (Rat).